We begin with the raw amino-acid sequence, 122 residues long: Small ribosomal subunit protein uS13 (122 aa).

Residues 99-122 form a disordered region; the sequence is RGQRTHTNARTRKGPAKAIAGKKK.

The protein belongs to the universal ribosomal protein uS13 family. As to quaternary structure, part of the 30S ribosomal subunit. Forms a loose heterodimer with protein S19. Forms two bridges to the 50S subunit in the 70S ribosome.

Located at the top of the head of the 30S subunit, it contacts several helices of the 16S rRNA. In the 70S ribosome it contacts the 23S rRNA (bridge B1a) and protein L5 of the 50S subunit (bridge B1b), connecting the 2 subunits; these bridges are implicated in subunit movement. Contacts the tRNAs in the A and P-sites. The polypeptide is Small ribosomal subunit protein uS13 (Agrobacterium fabrum (strain C58 / ATCC 33970) (Agrobacterium tumefaciens (strain C58))).